The following is a 314-amino-acid chain: tRNA pseudouridine synthase B (314 aa).

His-43 contacts substrate. Residue Asp-48 is the Nucleophile of the active site. Tyr-76, Tyr-179, and Leu-200 together coordinate substrate.

It belongs to the pseudouridine synthase TruB family. Type 1 subfamily.

The enzyme catalyses uridine(55) in tRNA = pseudouridine(55) in tRNA. In terms of biological role, responsible for synthesis of pseudouridine from uracil-55 in the psi GC loop of transfer RNAs. The sequence is that of tRNA pseudouridine synthase B from Salmonella paratyphi A (strain ATCC 9150 / SARB42).